Consider the following 285-residue polypeptide: Energy-coupling factor transporter ATP-binding protein EcfA2 (285 aa).

The ABC transporter domain maps to 3–245 (IKIENLNHIY…VETLEKIGLA (243 aa)). 40–47 (GHTGSGKS) contributes to the ATP binding site.

Belongs to the ABC transporter superfamily. Energy-coupling factor EcfA family. As to quaternary structure, forms a stable energy-coupling factor (ECF) transporter complex composed of 2 membrane-embedded substrate-binding proteins (S component), 2 ATP-binding proteins (A component) and 2 transmembrane proteins (T component).

It localises to the cell membrane. ATP-binding (A) component of a common energy-coupling factor (ECF) ABC-transporter complex. Unlike classic ABC transporters this ECF transporter provides the energy necessary to transport a number of different substrates. The polypeptide is Energy-coupling factor transporter ATP-binding protein EcfA2 (Clostridium perfringens (strain 13 / Type A)).